Reading from the N-terminus, the 188-residue chain is 3-hydroxyanthranilate 3,4-dioxygenase 2 (188 aa).

Residue Arg-46 coordinates O2. Fe cation is bound by residues His-50, Glu-70, and His-108. A substrate-binding site is contributed by Glu-70. Substrate-binding residues include Arg-112 and Glu-122.

This sequence belongs to the 3-HAO family. The cofactor is Fe(2+).

It localises to the cytoplasm. It catalyses the reaction 3-hydroxyanthranilate + O2 = (2Z,4Z)-2-amino-3-carboxymuconate 6-semialdehyde. It functions in the pathway cofactor biosynthesis; NAD(+) biosynthesis; quinolinate from L-kynurenine: step 3/3. Catalyzes the oxidative ring opening of 3-hydroxyanthranilate to 2-amino-3-carboxymuconate semialdehyde, which spontaneously cyclizes to quinolinate. The protein is 3-hydroxyanthranilate 3,4-dioxygenase 2 (bna1-2) of Aspergillus fumigatus (strain CBS 144.89 / FGSC A1163 / CEA10) (Neosartorya fumigata).